The following is a 602-amino-acid chain: Aspartate--tRNA(Asp/Asn) ligase (602 aa).

E170 lines the L-aspartate pocket. Residues 194-197 (QLFK) form an aspartate region. Position 216 (R216) interacts with L-aspartate. Residues 216–218 (RDE) and Q225 each bind ATP. Position 448 (H448) interacts with L-aspartate. Residue E482 participates in ATP binding. Position 489 (R489) interacts with L-aspartate. An ATP-binding site is contributed by 534–537 (GWDR). The segment at 559–602 (GGVDPLTSAPAPITAQQRKESGVDAKPEPKGDAAAAKPQVSAEK) is disordered. Positions 575–589 (QRKESGVDAKPEPKG) are enriched in basic and acidic residues.

This sequence belongs to the class-II aminoacyl-tRNA synthetase family. Type 1 subfamily. In terms of assembly, homodimer.

The protein localises to the cytoplasm. It carries out the reaction tRNA(Asx) + L-aspartate + ATP = L-aspartyl-tRNA(Asx) + AMP + diphosphate. Its function is as follows. Aspartyl-tRNA synthetase with relaxed tRNA specificity since it is able to aspartylate not only its cognate tRNA(Asp) but also tRNA(Asn). Reaction proceeds in two steps: L-aspartate is first activated by ATP to form Asp-AMP and then transferred to the acceptor end of tRNA(Asp/Asn). This chain is Aspartate--tRNA(Asp/Asn) ligase, found in Rhodococcus opacus (strain B4).